We begin with the raw amino-acid sequence, 141 residues long: MFKEFREFALKGNVVDLAIGVIIGAAFGRIIDSLVNDIIMPFFGALGGLDFSNYFFPLTKGVTASSLAEARRQGAVLAWGNFLTVAVNFLIIAFVLFLIVRSINTFRKRVLKENLEVTPPAKPQDVVVLEEIRDLIAARRA.

Helical transmembrane passes span 8 to 28 (FALK…AAFG), 38 to 58 (IIMP…FFPL), and 80 to 100 (GNFL…FLIV).

This sequence belongs to the MscL family. In terms of assembly, homopentamer.

The protein resides in the cell inner membrane. Channel that opens in response to stretch forces in the membrane lipid bilayer. May participate in the regulation of osmotic pressure changes within the cell. In Beijerinckia indica subsp. indica (strain ATCC 9039 / DSM 1715 / NCIMB 8712), this protein is Large-conductance mechanosensitive channel.